Consider the following 68-residue polypeptide: Conotoxin Cal14.13b (68 aa).

Positions 1-20 (MKLCVVIVLLMLAMPFNGGE) are cleaved as a signal peptide. Residues 21–68 (ASRFFNQHARSQRSGMKTRGIWCDPPCPEGETCRGGECSDEFNGDMGR) constitute a propeptide that is removed on maturation. A Methionine amide modification is found at Met-66.

Contains 2 disulfide bonds. Expressed by the venom duct.

It is found in the secreted. Probable neurotoxin with unknown target. Possibly targets ion channels. The polypeptide is Conotoxin Cal14.13b (Californiconus californicus (California cone)).